Reading from the N-terminus, the 762-residue chain is Poly(A) RNA polymerase CID14 (762 aa).

The disordered stretch occupies residues 1-123 (MPTGFQPAES…KKEEQKAAER (123 aa)). Over residues 50 to 62 (KKNKKDKKKKGSK) the composition is skewed to basic residues. Basic and acidic residues-rich tracts occupy residues 65 to 75 (QPVDEPDKKDG) and 99 to 123 (RKRD…AAER). An ATP-binding site is contributed by S189. 2 residues coordinate Mg(2+): D200 and D202. Residues G266, K291, S309, and Y310 each contribute to the ATP site. Positions 336-393 (NLGTLLIEFFELFGRNFNYNDVGISIRRGGFYFSKASRGWMKGQSFLLSIEDPQDKDN) constitute a PAP-associated domain. The disordered stretch occupies residues 482-762 (SIPLGADPKP…LGQSSGDMSD (281 aa)). The span at 536-549 (VEDDELESDDDSDS) shows a compositional bias: acidic residues. Over residues 572-581 (RTANSRSTSR) the composition is skewed to polar residues. Residue K610 participates in ATP binding. Acidic residues-rich tracts occupy residues 677–687 (GEEEEEIDSDE) and 697–707 (SDGDLGSEDEI). Residues 753 to 762 (LGQSSGDMSD) are compositionally biased toward polar residues.

Belongs to the DNA polymerase type-B-like family. As to quaternary structure, component of the TRAMP complex. It depends on Mg(2+) as a cofactor. The cofactor is Mn(2+).

The protein localises to the nucleus. It is found in the nucleolus. It catalyses the reaction RNA(n) + ATP = RNA(n)-3'-adenine ribonucleotide + diphosphate. Its function is as follows. Required for 3' polyadenylation of the 5.8S and 25S rRNAs as a prelude to their degradation in the exosome. Involved in the nucleolar organization to ensure faithful chromosome segregation during mitosis. The sequence is that of Poly(A) RNA polymerase CID14 from Cryptococcus neoformans var. neoformans serotype D (strain JEC21 / ATCC MYA-565) (Filobasidiella neoformans).